A 381-amino-acid chain; its full sequence is E3 ubiquitin-protein ligase RNF34 (381 aa).

An FYVE-type zinc finger spans residues 56–107 (EGPNIVCKACGLSFSVFRKKHVCCDCKKDFCSLCSVSQENLRRCSTCHLLQE). Residues 115 to 134 (LMRLKVKDLRQYLLLRNVPT) enclose the SAP 1 domain. S169 is subject to Phosphoserine. The tract at residues 216–261 (LASANTDDEDGEEDDDDDDDDDDEDDDEQEENLEEQNPGLSKKKAR) is disordered. The segment covering 221 to 249 (TDDEDGEEDDDDDDDDDDEDDDEQEENLE) has biased composition (acidic residues). Phosphoserine occurs at positions 263 and 265. Residues 273–287 (VEGMSVRQLKEILAR) form the SAP 2 domain. The RING-type zinc-finger motif lies at 334–369 (CRICMDAVIDCVLLECGHMVTCTKCGKRMSECPICR).

Interacts with CASP8 and CASP10. Interacts with p53/TP53; involved in p53/TP53 ubiquitination. Interacts (via RING-type zinc finger) with MDM2; the interaction stabilizes MDM2. Interacts (via RING-type zinc finger) with PPARGC1A. Interacts with NOD1. Proteolytically cleaved by caspases upon induction of apoptosis by TNF. Post-translationally, autoubiquitinated (in vitro). Ubiquitous. Detected in brain, cerebellum, midbrain, hippocampus, striatum, heart, lung, kidney, muscle, spleen and testis.

Its subcellular location is the cell membrane. The protein localises to the endomembrane system. It is found in the nucleus. The protein resides in the nucleus speckle. It localises to the cytoplasm. Its subcellular location is the cytosol. The catalysed reaction is S-ubiquitinyl-[E2 ubiquitin-conjugating enzyme]-L-cysteine + [acceptor protein]-L-lysine = [E2 ubiquitin-conjugating enzyme]-L-cysteine + N(6)-ubiquitinyl-[acceptor protein]-L-lysine.. It participates in protein modification; protein ubiquitination. In terms of biological role, E3 ubiquitin-protein ligase that regulates several biological processes through the ubiquitin-mediated proteasomal degradation of various target proteins. Ubiquitinates the caspases CASP8 and CASP10, promoting their proteasomal degradation, to negatively regulate cell death downstream of death domain receptors in the extrinsic pathway of apoptosis. May mediate 'Lys-48'-linked polyubiquitination of RIPK1 and its subsequent proteasomal degradation thereby indirectly regulating the tumor necrosis factor-mediated signaling pathway. Negatively regulates p53/TP53 through its direct ubiquitination and targeting to proteasomal degradation. Indirectly, may also negatively regulate p53/TP53 through ubiquitination and degradation of SFN. Mediates PPARGC1A proteasomal degradation probably through ubiquitination thereby indirectly regulating the metabolism of brown fat cells. Possibly involved in innate immunity, through 'Lys-48'-linked polyubiquitination of NOD1 and its subsequent proteasomal degradation. The protein is E3 ubiquitin-protein ligase RNF34 of Rattus norvegicus (Rat).